The chain runs to 78 residues: uncharacterized protein (78 aa).

The next 2 membrane-spanning stretches (helical) occupy residues leucine 12–valine 32 and glycine 51–histidine 71.

The protein resides in the cell membrane. This is an uncharacterized protein from Treponema pallidum (strain Nichols).